Here is a 233-residue protein sequence, read N- to C-terminus: Ribonuclease HII (233 aa).

Residues 26–215 (QLVAGIDEVG…VRASEGEGLE (190 aa)) enclose the RNase H type-2 domain. Positions 32, 33, and 124 each coordinate a divalent metal cation. The interval 211–233 (GEGLETAAGRQSSEGKKGRRPRG) is disordered.

The protein belongs to the RNase HII family. Requires Mn(2+) as cofactor. Mg(2+) serves as cofactor.

The protein resides in the cytoplasm. It catalyses the reaction Endonucleolytic cleavage to 5'-phosphomonoester.. In terms of biological role, endonuclease that specifically degrades the RNA of RNA-DNA hybrids. This is Ribonuclease HII from Syntrophobacter fumaroxidans (strain DSM 10017 / MPOB).